The chain runs to 291 residues: ATP synthase gamma chain (291 aa).

Belongs to the ATPase gamma chain family. F-type ATPases have 2 components, CF(1) - the catalytic core - and CF(0) - the membrane proton channel. CF(1) has five subunits: alpha(3), beta(3), gamma(1), delta(1), epsilon(1). CF(0) has three main subunits: a, b and c.

The protein localises to the cell membrane. Functionally, produces ATP from ADP in the presence of a proton gradient across the membrane. The gamma chain is believed to be important in regulating ATPase activity and the flow of protons through the CF(0) complex. The polypeptide is ATP synthase gamma chain (Streptococcus pyogenes serotype M3 (strain ATCC BAA-595 / MGAS315)).